Consider the following 1403-residue polypeptide: DNA-directed RNA polymerase subunit beta' (1403 aa).

Zn(2+) is bound by residues C70, C72, C85, and C88. 3 residues coordinate Mg(2+): D461, D463, and D465. Positions 687–708 (QQISQEETTGDRDGKRETRKQP) are disordered. Over residues 695 to 706 (TGDRDGKRETRK) the composition is skewed to basic and acidic residues. Zn(2+) contacts are provided by C805, C879, C886, and C889. The segment at 1381–1403 (THGDTGPLGEPSRPVGTQTTGAA) is disordered.

This sequence belongs to the RNA polymerase beta' chain family. The RNAP catalytic core consists of 2 alpha, 1 beta, 1 beta' and 1 omega subunit. When a sigma factor is associated with the core the holoenzyme is formed, which can initiate transcription. It depends on Mg(2+) as a cofactor. Requires Zn(2+) as cofactor.

It catalyses the reaction RNA(n) + a ribonucleoside 5'-triphosphate = RNA(n+1) + diphosphate. Functionally, DNA-dependent RNA polymerase catalyzes the transcription of DNA into RNA using the four ribonucleoside triphosphates as substrates. In Myxococcus xanthus (strain DK1622), this protein is DNA-directed RNA polymerase subunit beta'.